A 282-amino-acid polypeptide reads, in one-letter code: Protein N-terminal and lysine N-methyltransferase efm7 (282 aa).

Basic and acidic residues predominate over residues 1-13 (MSKPEEVVNHVPE). A disordered region spans residues 1–32 (MSKPEEVVNHVPEDEGSDIEAGGLFEDPPDFY). Residues Trp-67, 93 to 95 (GAA), Asp-115, Trp-152, and Ala-179 contribute to the S-adenosyl-L-methionine site.

The protein belongs to the class I-like SAM-binding methyltransferase superfamily. EFM7 family.

It is found in the cytoplasm. S-adenosyl-L-methionine-dependent protein methyltransferase that trimethylates the N-terminal glycine 'Gly-2' of elongation factor 1-alpha, before also catalyzing the mono- and dimethylation of 'Lys-3'. In Neurospora crassa (strain ATCC 24698 / 74-OR23-1A / CBS 708.71 / DSM 1257 / FGSC 987), this protein is Protein N-terminal and lysine N-methyltransferase efm7 (nnt-1).